The chain runs to 22 residues: NADH-ubiquinone oxidoreductase 16 kDa subunit (22 aa).

Complex I is composed of about 45 different subunits.

It localises to the mitochondrion inner membrane. It carries out the reaction a ubiquinone + NADH + 5 H(+)(in) = a ubiquinol + NAD(+) + 4 H(+)(out). In terms of biological role, transfer of electrons from NADH to the respiratory chain. The immediate electron acceptor for the enzyme is believed to be ubiquinone. The chain is NADH-ubiquinone oxidoreductase 16 kDa subunit from Solanum tuberosum (Potato).